Reading from the N-terminus, the 115-residue chain is Ubiquitin-related modifier 1 (115 aa).

Position 115 is a 1-thioglycine (G115). A Glycyl lysine isopeptide (Gly-Lys) (interchain with K-? in acceptor proteins) cross-link involves residue G115.

The protein belongs to the URM1 family. Post-translationally, C-terminal thiocarboxylation occurs in 2 steps, it is first acyl-adenylated (-COAMP) via the hesA/moeB/thiF part of UBA4, then thiocarboxylated (-COSH) via the rhodanese domain of UBA4.

The protein resides in the cytoplasm. It functions in the pathway tRNA modification; 5-methoxycarbonylmethyl-2-thiouridine-tRNA biosynthesis. Its function is as follows. Acts as a sulfur carrier required for 2-thiolation of mcm(5)S(2)U at tRNA wobble positions of cytosolic tRNA(Lys), tRNA(Glu) and tRNA(Gln). Serves as sulfur donor in tRNA 2-thiolation reaction by being thiocarboxylated (-COSH) at its C-terminus by the MOCS3 homolog UBA4. The sulfur is then transferred to tRNA to form 2-thiolation of mcm(5)S(2)U. Prior mcm(5) tRNA modification by the elongator complex is required for 2-thiolation. Also acts as a ubiquitin-like protein (UBL) that is covalently conjugated via an isopeptide bond to lysine residues of target proteins such as AHP1. The thiocarboxylated form serves as substrate for conjugation and oxidative stress specifically induces the formation of UBL-protein conjugates. The protein is Ubiquitin-related modifier 1 of Coccidioides immitis (strain RS) (Valley fever fungus).